Here is a 419-residue protein sequence, read N- to C-terminus: Maltoporin 2 (419 aa).

The N-terminal stretch at 1–23 is a signal peptide; it reads MKTSLRTLSVALAAALVSPSVLA.

It belongs to the porin LamB (TC 1.B.3) family. In terms of assembly, homotrimer formed of three 18-stranded antiparallel beta-barrels, containing three independent channels.

It localises to the cell outer membrane. The enzyme catalyses beta-maltose(in) = beta-maltose(out). Involved in the transport of maltose and maltodextrins. The sequence is that of Maltoporin 2 from Yersinia pseudotuberculosis serotype O:1b (strain IP 31758).